The sequence spans 133 residues: MRHSNSGKKLGRTPSHRKALFRNMAKALLTYGKIRTTETKAKELRRIVEPLITLALRNDLHSRRLAYDVLGSHQLVKRLFDDIGPAFVGVSGGFTRVVKLGLPRKGDNAPLAVIELTHQPAAEAPAEEKKAAE.

This sequence belongs to the bacterial ribosomal protein bL17 family. Part of the 50S ribosomal subunit. Contacts protein L32.

The sequence is that of Large ribosomal subunit protein bL17 from Nitratidesulfovibrio vulgaris (strain DSM 19637 / Miyazaki F) (Desulfovibrio vulgaris).